A 121-amino-acid chain; its full sequence is Phosphoribosyl-ATP pyrophosphatase (121 aa).

It belongs to the PRA-PH family.

It is found in the cytoplasm. It carries out the reaction 1-(5-phospho-beta-D-ribosyl)-ATP + H2O = 1-(5-phospho-beta-D-ribosyl)-5'-AMP + diphosphate + H(+). It functions in the pathway amino-acid biosynthesis; L-histidine biosynthesis; L-histidine from 5-phospho-alpha-D-ribose 1-diphosphate: step 2/9. The polypeptide is Phosphoribosyl-ATP pyrophosphatase (Burkholderia cenocepacia (strain HI2424)).